The primary structure comprises 339 residues: UDP-glucose 4-epimerase (339 aa).

Residues 12 to 13 (FI), 32 to 37 (DNLCNS), 59 to 60 (DI), 81 to 85 (FAGLK), Asn-100, Ser-125, Tyr-150, Lys-154, and Phe-179 contribute to the NAD(+) site. Ser-125 and Tyr-150 together coordinate substrate. Residue Tyr-150 is the Proton acceptor of the active site. Residues Asn-180, 200 to 201 (NL), 217 to 219 (AVF), Arg-232, and 293 to 296 (RAGD) contribute to the substrate site.

The protein belongs to the NAD(P)-dependent epimerase/dehydratase family. Homodimer. NAD(+) serves as cofactor.

It carries out the reaction UDP-alpha-D-glucose = UDP-alpha-D-galactose. Its pathway is carbohydrate metabolism; galactose metabolism. Its function is as follows. Involved in the metabolism of galactose. Plays an essential role in the incorporation of galactose into meningococcal lipopolysaccharide surface molecules, which are important for pathogenesis. Catalyzes the conversion of UDP-galactose (UDP-Gal) to UDP-glucose (UDP-Glc) through a mechanism involving the transient reduction of NAD. The protein is UDP-glucose 4-epimerase (galE) of Neisseria meningitidis serogroup C.